A 715-amino-acid chain; its full sequence is Polyribonucleotide nucleotidyltransferase (715 aa).

2 residues coordinate Mg(2+): aspartate 498 and aspartate 504. The KH domain occupies 565-625 (PKVCMMQIKP…ETVKKTVAFI (61 aa)). Residues 635–709 (GTCYQASILR…RIDFLLLPKK (75 aa)) enclose the S1 motif domain.

This sequence belongs to the polyribonucleotide nucleotidyltransferase family. It depends on Mg(2+) as a cofactor.

The protein resides in the cytoplasm. The catalysed reaction is RNA(n+1) + phosphate = RNA(n) + a ribonucleoside 5'-diphosphate. In terms of biological role, involved in mRNA degradation. Catalyzes the phosphorolysis of single-stranded polyribonucleotides processively in the 3'- to 5'-direction. The sequence is that of Polyribonucleotide nucleotidyltransferase from Aster yellows witches'-broom phytoplasma (strain AYWB).